The sequence spans 334 residues: Glyceraldehyde-3-phosphate dehydrogenase B (334 aa).

NAD(+) is bound by residues Arg-12–Ile-13, Asp-34, and Ser-121. D-glyceraldehyde 3-phosphate contacts are provided by residues Ser-149 to Thr-151, Thr-180, Thr-209 to Gly-210, and Arg-232. The Nucleophile role is filled by Cys-150. Asn-314 contacts NAD(+).

Belongs to the glyceraldehyde-3-phosphate dehydrogenase family. As to quaternary structure, homotetramer.

The enzyme catalyses D-glyceraldehyde 3-phosphate + phosphate + NAD(+) = (2R)-3-phospho-glyceroyl phosphate + NADH + H(+). It functions in the pathway carbohydrate degradation; glycolysis; pyruvate from D-glyceraldehyde 3-phosphate: step 1/5. Glyceraldehyde-3-phosphate dehydrogenase; part of the gene cluster that mediates the biosynthesis of heptelidic acid (HA), a sesquiterpene lactone that acts as an inhibitor of glyceraldehyde-3-phosphatedehydrogenase (GAPDH) and a growth inhibitor of the salt-tolerant lactic acid bacteria in soy sauce brewing. The GAPDPH hepG/gdpB shows much higher resistance to HA than the GAPDH gpdA located outside of the cluster, but it does not seem to act in self-resistance. In Aspergillus oryzae (strain ATCC 42149 / RIB 40) (Yellow koji mold), this protein is Glyceraldehyde-3-phosphate dehydrogenase B.